The sequence spans 302 residues: Urease accessory protein UreD 2 (302 aa).

It belongs to the UreD family. UreD, UreF and UreG form a complex that acts as a GTP-hydrolysis-dependent molecular chaperone, activating the urease apoprotein by helping to assemble the nickel containing metallocenter of UreC. The UreE protein probably delivers the nickel.

The protein localises to the cytoplasm. In terms of biological role, required for maturation of urease via the functional incorporation of the urease nickel metallocenter. This Brucella canis (strain ATCC 23365 / NCTC 10854 / RM-666) protein is Urease accessory protein UreD 2.